The chain runs to 428 residues: Cell division protein DamX (428 aa).

The tract at residues 1–99 (MDEFKPEDEL…KRKKAASKPA (99 aa)) is disordered. The Cytoplasmic segment spans residues 1–103 (MDEFKPEDEL…AASKPASRQY (103 aa)). Composition is skewed to basic and acidic residues over residues 7–36 (EDELKPDPSDRRTGRSRQSSERSERTERGE) and 50–64 (DDRRPTRAQKERNEE). A coiled-coil region spans residues 55-87 (TRAQKERNEEPEIEEEIDESEDETVDEERVERR). The span at 65 to 82 (PEIEEEIDESEDETVDEE) shows a compositional bias: acidic residues. A compositionally biased stretch (basic residues) spans 86–95 (RRPRKRKKAA). A helical membrane pass occupies residues 104 to 124 (MMMGVGILVLLLLIIGIGSAL). The Periplasmic segment spans residues 125-428 (KAPSTTSSDQ…PLRQVQADLK (304 aa)). Disordered regions lie at residues 149-190 (TDQA…VATD) and 226-344 (EPAT…KSAP). Residues 236 to 257 (GNASRDTAKTQTAERPSTTRPA) are compositionally biased toward polar residues. Residues 288–334 (PAAPVASTKAPAATSTPAPKETATTAPVQTASPAQTTATPAAGAKTA) show a composition bias toward low complexity. The 78-residue stretch at 342 to 419 (SAPSSHYTLQ…VQAKNPWAKP (78 aa)) folds into the SPOR domain.

Belongs to the DamX family. Interacts in vitro with multiple Fts proteins, including FtsQ and FtsN.

The protein resides in the cell inner membrane. In terms of biological role, non-essential cell division protein. This chain is Cell division protein DamX, found in Escherichia coli (strain K12).